An 80-amino-acid polypeptide reads, in one-letter code: Exodeoxyribonuclease 7 small subunit (80 aa).

This sequence belongs to the XseB family. Heterooligomer composed of large and small subunits.

Its subcellular location is the cytoplasm. The catalysed reaction is Exonucleolytic cleavage in either 5'- to 3'- or 3'- to 5'-direction to yield nucleoside 5'-phosphates.. Functionally, bidirectionally degrades single-stranded DNA into large acid-insoluble oligonucleotides, which are then degraded further into small acid-soluble oligonucleotides. The chain is Exodeoxyribonuclease 7 small subunit from Cronobacter sakazakii (strain ATCC BAA-894) (Enterobacter sakazakii).